Consider the following 513-residue polypeptide: Maturase K (513 aa).

Belongs to the intron maturase 2 family. MatK subfamily.

It is found in the plastid. The protein resides in the chloroplast. Functionally, usually encoded in the trnK tRNA gene intron. Probably assists in splicing its own and other chloroplast group II introns. This chain is Maturase K, found in Arundo donax (Giant reed).